The primary structure comprises 120 residues: Large ribosomal subunit protein uL22 (120 aa).

The segment at 1–20 (MFVNRRYTARGKNLPSSPKK) is disordered.

It belongs to the universal ribosomal protein uL22 family. As to quaternary structure, part of the 50S ribosomal subunit.

Functionally, this protein binds specifically to 23S rRNA; its binding is stimulated by other ribosomal proteins, e.g. L4, L17, and L20. It is important during the early stages of 50S assembly. It makes multiple contacts with different domains of the 23S rRNA in the assembled 50S subunit and ribosome. The globular domain of the protein is located near the polypeptide exit tunnel on the outside of the subunit, while an extended beta-hairpin is found that lines the wall of the exit tunnel in the center of the 70S ribosome. The protein is Large ribosomal subunit protein uL22 of Borrelia hermsii (strain HS1 / DAH).